Reading from the N-terminus, the 149-residue chain is Large ribosomal subunit protein bL9 (149 aa).

Belongs to the bacterial ribosomal protein bL9 family.

In terms of biological role, binds to the 23S rRNA. The sequence is that of Large ribosomal subunit protein bL9 from Vibrio cholerae serotype O1 (strain ATCC 39541 / Classical Ogawa 395 / O395).